The primary structure comprises 56 residues: Large ribosomal subunit protein bL33 (56 aa).

The protein belongs to the bacterial ribosomal protein bL33 family.

This chain is Large ribosomal subunit protein bL33, found in Marinomonas sp. (strain MWYL1).